The primary structure comprises 641 residues: Chaperone protein DnaK (641 aa).

The residue at position 199 (Thr-199) is a Phosphothreonine; by autocatalysis. A compositionally biased stretch (basic and acidic residues) spans 577 to 590 (KGDNKDEIETRTQK). Residues 577–641 (KGDNKDEIET…EFEEVDDKKK (65 aa)) are disordered. The span at 617-626 (GAEQASAQQD) shows a compositional bias: low complexity. The segment covering 627-641 (DVVDAEFEEVDDKKK) has biased composition (acidic residues).

The protein belongs to the heat shock protein 70 family.

Acts as a chaperone. The polypeptide is Chaperone protein DnaK (Thioalkalivibrio sulfidiphilus (strain HL-EbGR7)).